We begin with the raw amino-acid sequence, 206 residues long: Probable thymidylate kinase (206 aa).

Gly7–Ser14 lines the ATP pocket.

It belongs to the thymidylate kinase family.

The catalysed reaction is dTMP + ATP = dTDP + ADP. The sequence is that of Probable thymidylate kinase from Methanospirillum hungatei JF-1 (strain ATCC 27890 / DSM 864 / NBRC 100397 / JF-1).